Here is a 330-residue protein sequence, read N- to C-terminus: Phosphate acyltransferase (330 aa).

It belongs to the PlsX family. In terms of assembly, homodimer. Probably interacts with PlsY.

The protein localises to the cytoplasm. It catalyses the reaction a fatty acyl-[ACP] + phosphate = an acyl phosphate + holo-[ACP]. Its pathway is lipid metabolism; phospholipid metabolism. Functionally, catalyzes the reversible formation of acyl-phosphate (acyl-PO(4)) from acyl-[acyl-carrier-protein] (acyl-ACP). This enzyme utilizes acyl-ACP as fatty acyl donor, but not acyl-CoA. This chain is Phosphate acyltransferase, found in Teredinibacter turnerae (strain ATCC 39867 / T7901).